The following is a 273-amino-acid chain: SPRY domain-containing SOCS box protein 4 (273 aa).

Residues 34–233 (PARLDQLLDM…MRYINGLDPE (200 aa)) form the B30.2/SPRY domain. One can recognise an SOCS box domain in the interval 234–273 (PLPLMDLCRRSIRSALGRQRLRDIGSLPLPQSLKNYLQYQ).

The protein belongs to the SPSB family. In terms of assembly, component of the probable ECS(SPSB4) E3 ubiquitin-protein ligase complex which contains CUL5, RNF7/RBX2, Elongin BC complex and SPSB4. Interacts with CUL5; RNF7; ELOB and ELOC. Interacts with MET. Interacts (via B30.2/SPRY domain) with PAWR; this interaction occurs in association with the Elongin BC complex. Interacts with NOS2. Interacts with EPHB2.

It is found in the cytoplasm. The protein resides in the cytosol. It participates in protein modification; protein ubiquitination. Functionally, substrate recognition component of a SCF-like ECS (Elongin BC-CUL2/5-SOCS-box protein) E3 ubiquitin-protein ligase complex which mediates the ubiquitination and subsequent proteasomal degradation of target proteins. Negatively regulates nitric oxide (NO) production and limits cellular toxicity in activated macrophages by mediating the ubiquitination and proteasomal degradation of NOS2. Acts as a bridge which links NOS2 with the ECS E3 ubiquitin ligase complex components ELOC and CUL5. Diminishes EphB2-dependent cell repulsive responses by mediating the ubiquitination and degradation of the EphB2/CTF2. Regulates cellular clock function by mediating ubiquitination and proteasomal degradation of the circadian transcriptional repressor NR1D1. This chain is SPRY domain-containing SOCS box protein 4 (Spsb4), found in Mus musculus (Mouse).